A 198-amino-acid polypeptide reads, in one-letter code: Pyridoxal 5'-phosphate synthase subunit PdxT (198 aa).

Residue 52-54 (GES) participates in L-glutamine binding. The active-site Nucleophile is Cys84. Residues Arg115 and 142–143 (IR) each bind L-glutamine. Catalysis depends on charge relay system residues His178 and Glu180.

Belongs to the glutaminase PdxT/SNO family. As to quaternary structure, in the presence of PdxS, forms a dodecamer of heterodimers. Only shows activity in the heterodimer.

It catalyses the reaction aldehydo-D-ribose 5-phosphate + D-glyceraldehyde 3-phosphate + L-glutamine = pyridoxal 5'-phosphate + L-glutamate + phosphate + 3 H2O + H(+). It carries out the reaction L-glutamine + H2O = L-glutamate + NH4(+). It functions in the pathway cofactor biosynthesis; pyridoxal 5'-phosphate biosynthesis. In terms of biological role, catalyzes the hydrolysis of glutamine to glutamate and ammonia as part of the biosynthesis of pyridoxal 5'-phosphate. The resulting ammonia molecule is channeled to the active site of PdxS. This is Pyridoxal 5'-phosphate synthase subunit PdxT from Archaeoglobus fulgidus (strain ATCC 49558 / DSM 4304 / JCM 9628 / NBRC 100126 / VC-16).